The chain runs to 534 residues: 26S proteasome non-ATPase regulatory subunit 3 (534 aa).

A compositionally biased stretch (basic and acidic residues) spans 1 to 16; the sequence is MKQEGSARRRGADKAK. Residues 1 to 68 form a disordered region; the sequence is MKQEGSARRR…AAEHSQRELD (68 aa). The span at 17-32 shows a compositional bias: pro residues; sequence PPPGGGEQEPPPPPAP. Lys38 is covalently cross-linked (Glycyl lysine isopeptide (Lys-Gly) (interchain with G-Cter in SUMO1); alternate). Lys38 is covalently cross-linked (Glycyl lysine isopeptide (Lys-Gly) (interchain with G-Cter in SUMO2); alternate). Low complexity predominate over residues 49–61; that stretch reads GETAGKTAAAAAE. A PCI domain is found at 286–465; that stretch reads ARYLYYTGRI…GYVQSKEMID (180 aa). A phosphoserine mark is found at Ser418 and Ser430. The interval 500 to 534 is disordered; the sequence is SYNKDLESAEERREREQQDLEFAKEMAEDDDDSFP. Residues 501 to 525 show a composition bias toward basic and acidic residues; the sequence is YNKDLESAEERREREQQDLEFAKEM.

This sequence belongs to the proteasome subunit S3 family. Component of the 19S proteasome regulatory particle complex. The 26S proteasome consists of a 20S core particle (CP) and two 19S regulatory subunits (RP). The regulatory particle is made of a lid composed of 9 subunits including PSMD3, a base containing 6 ATPases and few additional components. Interacts with UBQLN1 (via ubiquitin-like domain). Interacts with ERCC6.

In terms of biological role, component of the 26S proteasome, a multiprotein complex involved in the ATP-dependent degradation of ubiquitinated proteins. This complex plays a key role in the maintenance of protein homeostasis by removing misfolded or damaged proteins, which could impair cellular functions, and by removing proteins whose functions are no longer required. Therefore, the proteasome participates in numerous cellular processes, including cell cycle progression, apoptosis, or DNA damage repair. The chain is 26S proteasome non-ATPase regulatory subunit 3 (PSMD3) from Bos taurus (Bovine).